The following is a 69-amino-acid chain: MSLGLIFALLLTHAAAAKEIGIKTVNDYIKQGESHWYTSYVTSHTFDVYLVWNNPSNSLTLTVYSPDGS.

A signal peptide spans 1 to 16; the sequence is MSLGLIFALLLTHAAA.

This is an uncharacterized protein from Archaeoglobus fulgidus (strain ATCC 49558 / DSM 4304 / JCM 9628 / NBRC 100126 / VC-16).